The chain runs to 297 residues: MKPQVYHVDAFTSQPFRGNSAGVVFPADNLSEAQMQLIARELGHSETAFLLHSDDSDVRIRYFTPTVEVPICGHATVAAHYVRAKVLGLGNCTVWQTSLAGKHRVTIEKHHDGYRISLEQGTPGFEPPLEGETRAAIINALHLTEDDILPGLPIQVATTGHSKVMIPLKPEVDIDALSPDLNALTAISKQIGCNGFFPFQIRPGKNETDGRMFSPAIGIVEDPVTGNANGPMGAWLVHHNVLPHDGNVLRVKGHQGRALGRDGMIEVTVTIRDNQPEKVTISGAAVILFHAEWAIKL.

E46 is an active-site residue.

It belongs to the PhzF family. Homodimer and homotetramer.

This is an uncharacterized protein from Escherichia coli O157:H7.